Reading from the N-terminus, the 78-residue chain is DNA-directed RNA polymerase subunit Rpo5 (78 aa).

The protein belongs to the archaeal Rpo5/eukaryotic RPB5 RNA polymerase subunit family. In terms of assembly, part of the RNA polymerase complex.

Its subcellular location is the cytoplasm. The enzyme catalyses RNA(n) + a ribonucleoside 5'-triphosphate = RNA(n+1) + diphosphate. In terms of biological role, DNA-dependent RNA polymerase (RNAP) catalyzes the transcription of DNA into RNA using the four ribonucleoside triphosphates as substrates. The polypeptide is DNA-directed RNA polymerase subunit Rpo5 (Methanosarcina mazei (strain ATCC BAA-159 / DSM 3647 / Goe1 / Go1 / JCM 11833 / OCM 88) (Methanosarcina frisia)).